A 233-amino-acid chain; its full sequence is Transcriptional regulatory protein NatR (233 aa).

The 115-residue stretch at 3–117 folds into the Response regulatory domain; it reads KVGLVDDYRV…RLAASFDRYL (115 aa). Asp-54 bears the 4-aspartylphosphate mark. The HTH LytTR-type domain maps to 129 to 233; the sequence is ILIKQKSEMH…QLDYFQNYYF (105 aa).

Post-translationally, phosphorylated by NatK.

It is found in the cytoplasm. Functionally, member of the two-component regulatory system NatK/NatR that positively regulates the expression of the natAB operon. Acts by binding directly to the promoter of natAB. The protein is Transcriptional regulatory protein NatR of Bacillus subtilis (strain 168).